The chain runs to 66 residues: Large ribosomal subunit protein uL29 (66 aa).

It belongs to the universal ribosomal protein uL29 family.

This Ruegeria pomeroyi (strain ATCC 700808 / DSM 15171 / DSS-3) (Silicibacter pomeroyi) protein is Large ribosomal subunit protein uL29.